The sequence spans 391 residues: 23S rRNA (uracil(747)-C(5))-methyltransferase RlmC (391 aa).

The [4Fe-4S] cluster site is built by C5, C13, C16, and C95. S-adenosyl-L-methionine is bound by residues Q220, F249, E276, and N322. Residue C349 is the Nucleophile of the active site.

This sequence belongs to the class I-like SAM-binding methyltransferase superfamily. RNA M5U methyltransferase family. RlmC subfamily.

The enzyme catalyses uridine(747) in 23S rRNA + S-adenosyl-L-methionine = 5-methyluridine(747) in 23S rRNA + S-adenosyl-L-homocysteine + H(+). In terms of biological role, catalyzes the formation of 5-methyl-uridine at position 747 (m5U747) in 23S rRNA. The polypeptide is 23S rRNA (uracil(747)-C(5))-methyltransferase RlmC (Actinobacillus pleuropneumoniae serotype 3 (strain JL03)).